The following is a 624-amino-acid chain: Capsid protein p87 (624 aa).

Disordered regions lie at residues 183–208, 254–326, and 341–410; these read FADT…QDFD, STPL…TPVS, and TDLP…QKRR. The A-1 repeat unit spans residues 256–268; the sequence is PLQEYQMPPQTPA. Positions 256–280 are 2 X 13 AA tandem repeats, motif A; that stretch reads PLQEYQMPPQTPAPLQDQMPPQTPA. An A-2 repeat occupies 269–280; sequence PLQDQMPPQTPA. Residues 279–324 show a composition bias toward low complexity; the sequence is PAYATPAQQPSQPTPAQTPAQQPSQPTPAYVTSAQTPAQQPSQPTP. Residues 283–293 form a B-1 repeat; the sequence is TPAQQPSQPTP. A 3 X 11 AA repeats, motif B region spans residues 283–324; that stretch reads TPAQQPSQPTPAQTPAQQPSQPTPAYVTSAQTPAQQPSQPTP. One copy of the B-2 repeat lies at 296–306; the sequence is TPAQQPSQPTP. One copy of the B-3 repeat lies at 314–324; that stretch reads TPAQQPSQPTP.

The protein localises to the virion. This Orgyia pseudotsugata multicapsid polyhedrosis virus (OpMNPV) protein is Capsid protein p87 (P87).